Consider the following 206-residue polypeptide: Probable N-acetyltransferase 14 (206 aa).

The region spanning 6 to 206 (LSVREMREDE…TLVREFSKDL (201 aa)) is the N-acetyltransferase domain. A helical membrane pass occupies residues 57–77 (FVLASFALALLLPVFLAVAAV).

The protein belongs to the camello family. As to expression, expressed in K-562 and HeLa cell lines and in brain.

Its subcellular location is the membrane. Its function is as follows. Probable acetyltransferase. Functionally, may act as a transcription factor that regulates the expression of coproporphyrinogen oxidase by binding to a promoter regulatory element. The chain is Probable N-acetyltransferase 14 (NAT14) from Homo sapiens (Human).